Here is a 379-residue protein sequence, read N- to C-terminus: MKEQCVAMLLAGGKGSRLNALTKNLAKPAVPFGGKYRIIDFALSNCANSGIHHVGVLTQYQPLLLNSYIGIGEPWDLDRNDGGVSILSPYAEASEVKWYKGTASAIYENRHFLKELQPEHVLILSGDHIYKMDYGKMLEYHAEKQADATIAVIEVSWAEAGRFGILHTNDKMEITSFEEKPKYPKSNLASMGVYVFKWSVLEDALERDEKNSASSHDFGKDVIPALLEENKRLNAYPFKGYWKDVGTVRSLWEANMDLLGDHPPLDLFERNWRIYSVSPNLPPQFVADLAEIKESLVSEGCTVYGSVTRSVIFQRVAIGRHSAIKRSVVMHDVSIGEYVEIENAIVSAGIRIPDGFCAKPEDGEVLLITEEYVKKHKVV.

Alpha-D-glucose 1-phosphate-binding positions include Y99, G164, 179–180 (EK), and S190.

It belongs to the bacterial/plant glucose-1-phosphate adenylyltransferase family. In terms of assembly, homotetramer.

It catalyses the reaction alpha-D-glucose 1-phosphate + ATP + H(+) = ADP-alpha-D-glucose + diphosphate. The protein operates within glycan biosynthesis; glycogen biosynthesis. In terms of biological role, involved in the biosynthesis of ADP-glucose, a building block required for the elongation reactions to produce glycogen. Catalyzes the reaction between ATP and alpha-D-glucose 1-phosphate (G1P) to produce pyrophosphate and ADP-Glc. This Bacillus licheniformis (strain ATCC 14580 / DSM 13 / JCM 2505 / CCUG 7422 / NBRC 12200 / NCIMB 9375 / NCTC 10341 / NRRL NRS-1264 / Gibson 46) protein is Glucose-1-phosphate adenylyltransferase.